The sequence spans 198 residues: ATP-dependent Clp protease proteolytic subunit (198 aa).

Ser98 (nucleophile) is an active-site residue. The active site involves His123.

Belongs to the peptidase S14 family. Fourteen ClpP subunits assemble into 2 heptameric rings which stack back to back to give a disk-like structure with a central cavity, resembling the structure of eukaryotic proteasomes.

The protein resides in the cytoplasm. The enzyme catalyses Hydrolysis of proteins to small peptides in the presence of ATP and magnesium. alpha-casein is the usual test substrate. In the absence of ATP, only oligopeptides shorter than five residues are hydrolyzed (such as succinyl-Leu-Tyr-|-NHMec, and Leu-Tyr-Leu-|-Tyr-Trp, in which cleavage of the -Tyr-|-Leu- and -Tyr-|-Trp bonds also occurs).. In terms of biological role, cleaves peptides in various proteins in a process that requires ATP hydrolysis. Has a chymotrypsin-like activity. Plays a major role in the degradation of misfolded proteins. The sequence is that of ATP-dependent Clp protease proteolytic subunit from Levilactobacillus brevis (strain ATCC 367 / BCRC 12310 / CIP 105137 / JCM 1170 / LMG 11437 / NCIMB 947 / NCTC 947) (Lactobacillus brevis).